The primary structure comprises 486 residues: Malonate-semialdehyde dehydrogenase 1 (486 aa).

5 residues coordinate NAD(+): Phe-154, Lys-178, Glu-181, Arg-182, and Ser-231. Cys-286 serves as the catalytic Nucleophile. Glu-386 contacts NAD(+).

Belongs to the aldehyde dehydrogenase family. IolA subfamily. In terms of assembly, homotetramer.

The enzyme catalyses 3-oxopropanoate + NAD(+) + CoA + H2O = hydrogencarbonate + acetyl-CoA + NADH + H(+). The catalysed reaction is 2-methyl-3-oxopropanoate + NAD(+) + CoA + H2O = propanoyl-CoA + hydrogencarbonate + NADH + H(+). Its pathway is polyol metabolism; myo-inositol degradation into acetyl-CoA; acetyl-CoA from myo-inositol: step 7/7. Catalyzes the oxidation of malonate semialdehyde (MSA) and methylmalonate semialdehyde (MMSA) into acetyl-CoA and propanoyl-CoA, respectively. Is involved in a myo-inositol catabolic pathway. Bicarbonate, and not CO2, is the end-product of the enzymatic reaction. This chain is Malonate-semialdehyde dehydrogenase 1, found in Bacillus thuringiensis (strain Al Hakam).